Reading from the N-terminus, the 316-residue chain is Probable protein-L-isoaspartate O-methyltransferase (316 aa).

S-adenosyl-L-homocysteine is bound by residues 103–106, His111, Ser136, 157–158, 187–188, Thr263, and Gln268; these read ATIS, EH, and DG. Residue Ser106 is part of the active site.

This sequence belongs to the methyltransferase superfamily. L-isoaspartyl/D-aspartyl protein methyltransferase family.

It localises to the cytoplasm. The protein resides in the cytosol. It carries out the reaction [protein]-L-isoaspartate + S-adenosyl-L-methionine = [protein]-L-isoaspartate alpha-methyl ester + S-adenosyl-L-homocysteine. Functionally, initiates the repair of damaged proteins by catalyzing methyl esterification of L-isoaspartyl and D-aspartyl residues produced by spontaneous isomerization and racemization of L-aspartyl and L-asparaginyl residues in aging peptides and proteins. The chain is Probable protein-L-isoaspartate O-methyltransferase (pcmA) from Dictyostelium discoideum (Social amoeba).